Reading from the N-terminus, the 525-residue chain is GMP synthase [glutamine-hydrolyzing] (525 aa).

The region spanning 8–207 is the Glutamine amidotransferase type-1 domain; it reads KILILDFGSQ…ALDICGCDAN (200 aa). The active-site Nucleophile is the cysteine 85. Residues histidine 181 and glutamate 183 contribute to the active site. The GMPS ATP-PPase domain occupies 208–400; that stretch reads WKPSSIIEDA…LGLPYDMLYR (193 aa). 235–241 is an ATP binding site; it reads SGGVDSS.

In terms of assembly, homodimer.

The enzyme catalyses XMP + L-glutamine + ATP + H2O = GMP + L-glutamate + AMP + diphosphate + 2 H(+). The protein operates within purine metabolism; GMP biosynthesis; GMP from XMP (L-Gln route): step 1/1. Its function is as follows. Catalyzes the synthesis of GMP from XMP. The chain is GMP synthase [glutamine-hydrolyzing] from Shewanella piezotolerans (strain WP3 / JCM 13877).